Reading from the N-terminus, the 189-residue chain is Molybdopterin synthase catalytic subunit (189 aa).

Phosphoserine is present on S20. Substrate is bound by residues 143 to 144 (HR), K159, and 166 to 168 (KKE).

The protein belongs to the MoaE family. MOCS2B subfamily. As to quaternary structure, heterotetramer; composed of 2 small (MOCS2A) and 2 large (MOCS2B) subunits.

Its subcellular location is the cytoplasm. The protein localises to the cytosol. The enzyme catalyses 2 [molybdopterin-synthase sulfur-carrier protein]-C-terminal-Gly-aminoethanethioate + cyclic pyranopterin phosphate + H2O = molybdopterin + 2 [molybdopterin-synthase sulfur-carrier protein]-C-terminal Gly-Gly + 2 H(+). It functions in the pathway cofactor biosynthesis; molybdopterin biosynthesis. Functionally, catalytic subunit of the molybdopterin synthase complex, a complex that catalyzes the conversion of precursor Z into molybdopterin. Acts by mediating the incorporation of 2 sulfur atoms from thiocarboxylated MOCS2A into precursor Z to generate a dithiolene group. The protein is Molybdopterin synthase catalytic subunit of Bos taurus (Bovine).